The primary structure comprises 905 residues: MSGDYKPNYQSSPSRKRLPLQSKDQASIYKYQTPSTLNLYNNTVNNNSSNNSNNHLLHNSNPNSSYLYDSSKQYSNQINIRNNSNSNSNTNNITSKKASSSYSINNKVDHNSHNNNDDDDIEDDVDINYSTNNASSNILHNRFSNSNKDDSYIDYSTDENPKILKQPQPLYNHLNNQIQQQQQQQQQQQQQQQQQQQQQQQQQQQQQQQQQQQRNNNNNSNSSNNNNTSTTIKRNNQQIDNNSNKNIISKFIGDPWKNFYYGSNKSLWPFERNNNSNNSSNNNNKVNFKQAIWIFIFSVLFIGCLLGLFSTNFYGIHIYFPSFSTTKTNSPFNSTNNNIQFSNLITKEQLYPIIDEYFKKNEILKSYNKLFEKIENDIKYLSEREQYKDIINEIKEELKLVKLSNMDEDRVNQLISKMINHYNNNENNKQELKELLSKSIEELTKLKSDSKEQLIQISTESMNQLGQLKSESINQLGQVKSESIDKFQSTLKSLSKEEQSKIEREFNHQFNQLNKDADQLLSQHSLKIEKLREEINENQQSSLLKLTQEYKQLEERLKEFSSKLQQSISSSSMDQFESWKLVFIKDIEERINKESSKLTNQYIQLTQQFTKIQSFIKDNPSIDSLTNTIESLEGIKLLIEDILEVYSADKIAKVDYALGLAGASIEYNALHYRVSETYPPIKGSGSGSGSGGANGNSLGLYYYNLATNWIFPQPKPNPPETILDPMVNTGSCWGFYTGNGTIVIRLAKKIAITEVTMEHISSNISHHIDSAPKEFQVFGLINSSDIGQSLGVFTYDTTINRHLQTFKVNKIQSTTTTTTNQDQNDDDNIQEFSHVALRILSNHGYRYTCIYRFRVHGYQIPHPEQEQIQIIQEEQSFKQEEINQQQIEQIEQIEQIEKQQQSDEL.

Disordered stretches follow at residues 1 to 21, 41 to 166, and 207 to 242; these read MSGDYKPNYQSSPSRKRLPLQ, NNTV…ILKQ, and QQQQQQQRNNNNNSNSSNNNNTSTTIKRNNQQIDNN. Residues 1-290 are Nuclear-facing; the sequence is MSGDYKPNYQ…NNNNKVNFKQ (290 aa). 2 stretches are compositionally biased toward low complexity: residues 41 to 67 and 75 to 101; these read NNTVNNNSSNNSNNHLLHNSNPNSSYL and SNQINIRNNSNSNSNTNNITSKKASSS. Over residues 107-116 the composition is skewed to basic and acidic residues; the sequence is KVDHNSHNNN. Positions 117 to 126 are enriched in acidic residues; it reads DDDDIEDDVD. Residues 129–146 show a composition bias toward polar residues; that stretch reads YSTNNASSNILHNRFSNS. The stretch at 170–221 forms a coiled coil; that stretch reads LYNHLNNQIQQQQQQQQQQQQQQQQQQQQQQQQQQQQQQQQQQQRNNNNNSN. Over residues 207–227 the composition is skewed to low complexity; it reads QQQQQQQRNNNNNSNSSNNNN. A helical transmembrane segment spans residues 291–311; the sequence is AIWIFIFSVLFIGCLLGLFST. Over 312 to 905 the chain is Perinuclear space; that stretch reads NFYGIHIYFP…IEKQQQSDEL (594 aa). Coiled-coil stretches lie at residues 359–456 and 504–609; these read KKNE…QLIQ and REFN…TQQF. In terms of domain architecture, SUN spans 662 to 860; that stretch reads GASIEYNALH…YRFRVHGYQI (199 aa). A coiled-coil region spans residues 864–901; the sequence is EQEQIQIIQEEQSFKQEEINQQQIEQIEQIEQIEKQQQ.

In terms of assembly, homodimer and homooligomer.

Its subcellular location is the nucleus membrane. Its function is as follows. May have an important role in defining the spacing of the nuclear envelope lumen. Essential for centrosome attachment to the nucleus, maintenance of correct ploidy, proper mitosis, association of the centromere cluster with the centrosome and the maintenance of genome stability. Requires direct chromatin binding for inner nuclear membrane targeting. The chain is Sun domain-containing protein 1 (sun1) from Dictyostelium discoideum (Social amoeba).